Reading from the N-terminus, the 704-residue chain is Probable ferric reduction oxidase 1 (704 aa).

Residues 1-16 (MGVGEMNKEVIDKVIK) are Cytoplasmic-facing. The helical transmembrane segment at 17–36 (FLMMVILMGTIVIWIMMPTS) threads the bilayer. The Lumenal portion of the chain corresponds to 37-62 (TYKEIWLTSMRAKLGKSIYYGRPGVN). The helical transmembrane segment at 63–81 (LLVYMFPMILLAFLGCIYL) threads the bilayer. Topologically, residues 82–115 (HLKKSTTVNQFNSGVEKKRAKFGALRRPMLVNGP) are cytoplasmic. Residues 116–139 (LGIVTVTEVMFLTMFMALLLWSLA) form a helical membrane-spanning segment. Residues 140 to 207 (NYMYRTFVNV…VGLTSESSIK (68 aa)) are Lumenal-facing. Residues 174–294 (GIVGNICLAF…YLYIVFMLFF (121 aa)) enclose the Ferric oxidoreductase domain. The helical transmembrane segment at 208–231 (YHIWLGHLVMIIFTSHGLCYFIYW) threads the bilayer. Residues His-209 and His-223 each contribute to the heme site. The Cytoplasmic portion of the chain corresponds to 232 to 282 (ISKNQLVSKMLEWDRTAVSNLAGEIALVAGLMMWVTTYPKIRRRLFEVFFY). A helical membrane pass occupies residues 283 to 307 (SHYLYIVFMLFFVFHVGISHALIPL). The heme site is built by His-284 and His-297. At 308–329 (PGFYIFLVDRFLRFLQSRNNVK) the chain is on the lumenal side. Residues 323–430 (QSRNNVKLVS…EGPYGPSSTD (108 aa)) enclose the FAD-binding FR-type domain. The helical transmembrane segment at 330–350 (LVSARVLPCDTVELNFSKNPM) threads the bilayer. Residues 351 to 550 (LMYSPTSTMF…PISPILGPNS (200 aa)) lie on the Cytoplasmic side of the membrane. FAD is bound at residue 372–375 (HPFT). 422-425 (GPYG) provides a ligand contact to NAD(+). A helical membrane pass occupies residues 551–573 (WLCLAAILSSSFMIFIVIIAIIT). Over 574-592 (RYHIHPIDQNSEKYTWAYK) the chain is Lumenal. The helical transmembrane segment at 593–614 (SLIYLVSISITVVTTSTAAMLW) threads the bilayer. Topologically, residues 615–704 (NKKKYYAKND…LHFESISFSW (90 aa)) are cytoplasmic.

This sequence belongs to the ferric reductase (FRE) family. The cofactor is FAD. As to expression, expressed in siliques. Detected in roots.

It localises to the membrane. It carries out the reaction 2 a Fe(II)-siderophore + NAD(+) + H(+) = 2 a Fe(III)-siderophore + NADH. Ferric chelate reductase involved in iron reduction in roots. May participate in the transport of electrons to a Fe(3+) ion via FAD and heme intermediates. The polypeptide is Probable ferric reduction oxidase 1 (FRO1) (Arabidopsis thaliana (Mouse-ear cress)).